The chain runs to 241 residues: Small ribosomal subunit protein uS2 (241 aa).

This sequence belongs to the universal ribosomal protein uS2 family.

The chain is Small ribosomal subunit protein uS2 from Sodalis glossinidius (strain morsitans).